The sequence spans 1089 residues: WD repeat-containing protein on Y chromosome (1089 aa).

WD repeat units lie at residues 155–199 (EEVA…IRTA), 207–249 (PHAV…RGPF), 329–368 (RIPL…EPSA), 372–411 (GHNG…LLQT), 462–501 (THAA…RKII), 514–553 (TIDI…VIRN), and 601–641 (FHTD…RRYS). The tract at residues 661 to 684 (KRSKRWASRAPHSGSHMMSHTGSH) is disordered. Over residues 672-684 (HSGSHMMSHTGSH) the composition is skewed to low complexity. 2 WD repeats span residues 767-806 (KTGD…IPEA) and 850-889 (GHLK…LGTL). The disordered stretch occupies residues 1049-1089 (LNIKLPSRRRSDRTNDPRNMRTAKTRGDMGLGHRSSHTSQN).

This Drosophila willistoni (Fruit fly) protein is WD repeat-containing protein on Y chromosome.